We begin with the raw amino-acid sequence, 338 residues long: Cytoskeleton protein RodZ (338 aa).

At 1–111 (MNTEATHDQN…LGKRRKKRDG (111 aa)) the chain is on the cytoplasmic side. Positions 19–71 (LRNAREQLGLSQQAVAERLCLKVSTVRDIEEDKAPADLASTFLRGYIRSYARL) constitute an HTH cro/C1-type domain. The H-T-H motif DNA-binding region spans 30 to 49 (QQAVAERLCLKVSTVRDIEE). Residues 112–132 (WLMTFTWLVLFVVIGLSGAWW) form a helical; Signal-anchor for type II membrane protein membrane-spanning segment. Residues 133–338 (WQDHKAQQEE…TLNAEQSPAQ (206 aa)) are Periplasmic-facing. Residues 155 to 169 (NANGTNSQSIPLENS) are compositionally biased toward polar residues. The segment at 155–240 (NANGTNSQSI…TTPDTATPLP (86 aa)) is disordered. The segment covering 170–188 (TTTVPEATPAPAAPVDTTA) has biased composition (low complexity). Positions 203 to 217 (EPQQNAVVPPSQANV) are enriched in polar residues. Residues 218–240 (DTATTAPAAPATTTTPDTATPLP) are compositionally biased toward low complexity.

It belongs to the RodZ family.

It is found in the cell inner membrane. Cytoskeletal protein that is involved in cell-shape control through regulation of the length of the long axis. The sequence is that of Cytoskeleton protein RodZ from Escherichia fergusonii (strain ATCC 35469 / DSM 13698 / CCUG 18766 / IAM 14443 / JCM 21226 / LMG 7866 / NBRC 102419 / NCTC 12128 / CDC 0568-73).